The sequence spans 171 residues: S-ribosylhomocysteine lyase (171 aa).

Residues histidine 54, histidine 58, and cysteine 128 each coordinate Fe cation.

It belongs to the LuxS family. Homodimer. The cofactor is Fe cation.

It catalyses the reaction S-(5-deoxy-D-ribos-5-yl)-L-homocysteine = (S)-4,5-dihydroxypentane-2,3-dione + L-homocysteine. Functionally, involved in the synthesis of autoinducer 2 (AI-2) which is secreted by bacteria and is used to communicate both the cell density and the metabolic potential of the environment. The regulation of gene expression in response to changes in cell density is called quorum sensing. Catalyzes the transformation of S-ribosylhomocysteine (RHC) to homocysteine (HC) and 4,5-dihydroxy-2,3-pentadione (DPD). The protein is S-ribosylhomocysteine lyase of Pectobacterium carotovorum subsp. carotovorum (strain PC1).